The chain runs to 178 residues: Gamma-crystallin S (178 aa).

An N-acetylserine modification is found at Ser-2. The tract at residues 2–5 (SKTG) is N-terminal arm. 2 Beta/gamma crystallin 'Greek key' domains span residues 6-44 (AKIS…RVEG) and 45-87 (GTWA…RAVH). The interval 88–93 (LSSGGQ) is connecting peptide. Beta/gamma crystallin 'Greek key' domains are found at residues 94-134 (YKIQ…KVLE) and 135-177 (GTWI…RRIV).

The protein belongs to the beta/gamma-crystallin family. As to quaternary structure, monomer.

In terms of biological role, crystallins are the dominant structural components of the vertebrate eye lens. The polypeptide is Gamma-crystallin S (Crygs) (Rattus norvegicus (Rat)).